Consider the following 379-residue polypeptide: tRNA 2-selenouridine synthase (379 aa).

One can recognise a Rhodanese domain in the interval 17-140 (FLSGAPLLDT…MRRFLIESLE (124 aa)). Cys100 functions as the S-selanylcysteine intermediate in the catalytic mechanism.

The protein belongs to the SelU family. Monomer.

It carries out the reaction 5-methylaminomethyl-2-thiouridine(34) in tRNA + selenophosphate + (2E)-geranyl diphosphate + H2O + H(+) = 5-methylaminomethyl-2-selenouridine(34) in tRNA + (2E)-thiogeraniol + phosphate + diphosphate. The enzyme catalyses 5-methylaminomethyl-2-thiouridine(34) in tRNA + (2E)-geranyl diphosphate = 5-methylaminomethyl-S-(2E)-geranyl-thiouridine(34) in tRNA + diphosphate. The catalysed reaction is 5-methylaminomethyl-S-(2E)-geranyl-thiouridine(34) in tRNA + selenophosphate + H(+) = 5-methylaminomethyl-2-(Se-phospho)selenouridine(34) in tRNA + (2E)-thiogeraniol. It catalyses the reaction 5-methylaminomethyl-2-(Se-phospho)selenouridine(34) in tRNA + H2O = 5-methylaminomethyl-2-selenouridine(34) in tRNA + phosphate. Functionally, involved in the post-transcriptional modification of the uridine at the wobble position (U34) of tRNA(Lys), tRNA(Glu) and tRNA(Gln). Catalyzes the conversion of 2-thiouridine (S2U-RNA) to 2-selenouridine (Se2U-RNA). Acts in a two-step process involving geranylation of 2-thiouridine (S2U) to S-geranyl-2-thiouridine (geS2U) and subsequent selenation of the latter derivative to 2-selenouridine (Se2U) in the tRNA chain. The chain is tRNA 2-selenouridine synthase from Hahella chejuensis (strain KCTC 2396).